A 343-amino-acid chain; its full sequence is Glyceraldehyde-3-phosphate dehydrogenase 1 (343 aa).

NAD(+)-binding positions include 13-14, aspartate 35, arginine 79, and serine 121; that span reads RI. D-glyceraldehyde 3-phosphate-binding positions include 154–156, threonine 185, 214–215, and arginine 237; these read SCT and TG. Residue cysteine 155 is the Nucleophile of the active site. Asparagine 319 lines the NAD(+) pocket.

This sequence belongs to the glyceraldehyde-3-phosphate dehydrogenase family. As to quaternary structure, homotetramer.

The protein localises to the cytoplasm. The catalysed reaction is D-glyceraldehyde 3-phosphate + phosphate + NAD(+) = (2R)-3-phospho-glyceroyl phosphate + NADH + H(+). The protein operates within carbohydrate degradation; glycolysis; pyruvate from D-glyceraldehyde 3-phosphate: step 1/5. Its function is as follows. Catalyzes the oxidative phosphorylation of glyceraldehyde 3-phosphate (G3P) to 1,3-bisphosphoglycerate (BPG) using the cofactor NAD. The first reaction step involves the formation of a hemiacetal intermediate between G3P and a cysteine residue, and this hemiacetal intermediate is then oxidized to a thioester, with concomitant reduction of NAD to NADH. The reduced NADH is then exchanged with the second NAD, and the thioester is attacked by a nucleophilic inorganic phosphate to produce BPG. The chain is Glyceraldehyde-3-phosphate dehydrogenase 1 (gap1) from Nostoc sp. (strain PCC 7120 / SAG 25.82 / UTEX 2576).